The sequence spans 146 residues: Large ribosomal subunit protein uL24 (146 aa).

The interval 1–33 (MKYNPRVTSSRRRNRKPHFTASSSERRVXMSSP) is disordered. Basic residues predominate over residues 9 to 18 (SSRRRNRKPH).

It belongs to the universal ribosomal protein uL24 family.

In Brassica campestris (Field mustard), this protein is Large ribosomal subunit protein uL24 (RPL26).